We begin with the raw amino-acid sequence, 324 residues long: Methenyltetrahydromethanopterin cyclohydrolase (324 aa).

It belongs to the MCH family.

Its subcellular location is the cytoplasm. It carries out the reaction 5,10-methenyl-5,6,7,8-tetrahydromethanopterin + H2O = N(5)-formyl-5,6,7,8-tetrahydromethanopterin + H(+). The protein operates within one-carbon metabolism; formaldehyde degradation; formate from formaldehyde (H(4)MPT route): step 3/5. Functionally, catalyzes the hydrolysis of methenyl-H(4)MPT(+) to 5-formyl-H(4)MPT. The protein is Methenyltetrahydromethanopterin cyclohydrolase of Methylobacterium nodulans (strain LMG 21967 / CNCM I-2342 / ORS 2060).